The following is a 247-amino-acid chain: MGRAFEYRKAAKLKRWGHMAKTFTRLGKQIAIAVKAGGPEPENNPTLRSVIATCKRENMPKDNIERAIKNAMGKDQSDYKSMTYEGYGPHGIAVFVDTLTDNTTRTVADVRSVFNKFGGNLGTMGSLAFLFDHKCMFTFKIKDGMDMEELILDLIDYDVEDEYEQDDEEGTITIYGDPKSYAAIQKHLEECGFEDVGGDFTYIPNDLKEVTPEQRETLDKMIERLEEFDDVQTVYTNMKPEEGGNEE.

Belongs to the TACO1 family.

Its subcellular location is the cytoplasm. The protein is Probable transcriptional regulatory protein BT_0627 of Bacteroides thetaiotaomicron (strain ATCC 29148 / DSM 2079 / JCM 5827 / CCUG 10774 / NCTC 10582 / VPI-5482 / E50).